We begin with the raw amino-acid sequence, 111 residues long: UPF0060 membrane protein Ajs_1473 (111 aa).

The next 4 helical transmembrane spans lie at 8-28, 33-53, 65-85, and 88-108; these read ILFA…WLVV, SAWL…LLTL, YGGM…GVAL, and WDFV…LQPA.

Belongs to the UPF0060 family.

Its subcellular location is the cell inner membrane. The sequence is that of UPF0060 membrane protein Ajs_1473 from Acidovorax sp. (strain JS42).